Consider the following 361-residue polypeptide: UDP-N-acetylglucosamine--N-acetylmuramyl-(pentapeptide) pyrophosphoryl-undecaprenol N-acetylglucosamine transferase (361 aa).

Residues 13–15 (TGG), Asn-125, Arg-167, Ser-196, Ile-251, 270–275 (ALTVTE), and Gln-296 each bind UDP-N-acetyl-alpha-D-glucosamine.

Belongs to the glycosyltransferase 28 family. MurG subfamily.

The protein localises to the cell inner membrane. The enzyme catalyses di-trans,octa-cis-undecaprenyl diphospho-N-acetyl-alpha-D-muramoyl-L-alanyl-D-glutamyl-meso-2,6-diaminopimeloyl-D-alanyl-D-alanine + UDP-N-acetyl-alpha-D-glucosamine = di-trans,octa-cis-undecaprenyl diphospho-[N-acetyl-alpha-D-glucosaminyl-(1-&gt;4)]-N-acetyl-alpha-D-muramoyl-L-alanyl-D-glutamyl-meso-2,6-diaminopimeloyl-D-alanyl-D-alanine + UDP + H(+). It participates in cell wall biogenesis; peptidoglycan biosynthesis. Cell wall formation. Catalyzes the transfer of a GlcNAc subunit on undecaprenyl-pyrophosphoryl-MurNAc-pentapeptide (lipid intermediate I) to form undecaprenyl-pyrophosphoryl-MurNAc-(pentapeptide)GlcNAc (lipid intermediate II). This is UDP-N-acetylglucosamine--N-acetylmuramyl-(pentapeptide) pyrophosphoryl-undecaprenol N-acetylglucosamine transferase from Psychrobacter cryohalolentis (strain ATCC BAA-1226 / DSM 17306 / VKM B-2378 / K5).